The primary structure comprises 206 residues: Dephospho-CoA kinase (206 aa).

Residues 4-204 (IVGLTGGIGS…QFYLQQAENK (201 aa)) enclose the DPCK domain. 12-17 (GSGKTT) is an ATP binding site.

This sequence belongs to the CoaE family.

The protein localises to the cytoplasm. The catalysed reaction is 3'-dephospho-CoA + ATP = ADP + CoA + H(+). It participates in cofactor biosynthesis; coenzyme A biosynthesis; CoA from (R)-pantothenate: step 5/5. In terms of biological role, catalyzes the phosphorylation of the 3'-hydroxyl group of dephosphocoenzyme A to form coenzyme A. The protein is Dephospho-CoA kinase of Haemophilus influenzae (strain 86-028NP).